The primary structure comprises 438 residues: Keratin, type I cytoskeletal 13 (438 aa).

Positions 1–95 are head; the sequence is MSCRFQSSSM…SVDGGLLSGN (95 aa). An omega-N-methylarginine mark is found at Arg-27 and Arg-35. The coil stretch occupies residues 96 to 131; that stretch reads EKITMQNLNDRLASYLEKVRALEAANADLEVKIRDW. Residues 96 to 408 enclose the IF rod domain; it reads EKITMQNLND…SLLEGQDAKM (313 aa). Residues 132 to 150 form a linker 1 region; sequence HLKQSPTSPERDYSAYYKT. Positions 151–242 are coil 1B; sequence IEELRIKILE…KNHEEEMKEF (92 aa). The tract at residues 243–265 is linker 12; that stretch reads SNQAVGQVNVEMDATPGIDLTRV. Positions 266-404 are coil 2; the sequence is LAEMREQYEA…ATYRSLLEGQ (139 aa). Positions 405-438 are tail; that stretch reads DAKMTGFNTGGNSTTTSNTSTSPSTSGRPDFRKY. Residues 408–438 are disordered; the sequence is MTGFNTGGNSTTTSNTSTSPSTSGRPDFRKY. Residues 409–431 are compositionally biased toward low complexity; sequence TGFNTGGNSTTTSNTSTSPSTSG.

Belongs to the intermediate filament family. As to quaternary structure, heterotetramer of two type I and two type II keratins. Post-translationally, O-glycosylated; glycans consist of single N-acetylglucosamine residues.

Type 1 keratin. Maintains postnatal tongue mucosal cell homeostasis and tissue organization in response to mechanical stress, potentially via regulation of the G1/S phase cyclins CCNE1 and CCNE2. The chain is Keratin, type I cytoskeletal 13 from Rattus norvegicus (Rat).